A 319-amino-acid chain; its full sequence is uncharacterized protein (319 aa).

A helical transmembrane segment spans residues 270–290 (AAALWWIPAWLAMIVEVAVLG).

The protein localises to the membrane. This is an uncharacterized protein from Mycobacterium tuberculosis (strain CDC 1551 / Oshkosh).